Here is a 391-residue protein sequence, read N- to C-terminus: Eukaryotic initiation factor 4A-3 (391 aa).

A Q motif motif is present at residues A18–Q46. In terms of domain architecture, Helicase ATP-binding spans V49–I219. A62–T69 is an ATP binding site. Positions D167 to D170 match the DEAD box motif. Positions G230–I391 constitute a Helicase C-terminal domain.

It belongs to the DEAD box helicase family. eIF4A subfamily. In terms of assembly, eIF4F is a multi-subunit complex, the composition of which varies with external and internal environmental conditions. It is composed of at least EIF4A, EIF4E and EIF4G.

It carries out the reaction ATP + H2O = ADP + phosphate + H(+). In terms of biological role, ATP-dependent RNA helicase which is a subunit of the eIF4F complex involved in cap recognition and is required for mRNA binding to ribosome. In the current model of translation initiation, eIF4A unwinds RNA secondary structures in the 5'-UTR of mRNAs which is necessary to allow efficient binding of the small ribosomal subunit, and subsequent scanning for the initiator codon. The protein is Eukaryotic initiation factor 4A-3 of Nicotiana plumbaginifolia (Leadwort-leaved tobacco).